We begin with the raw amino-acid sequence, 230 residues long: Fibrillarin-like rRNA/tRNA 2'-O-methyltransferase (230 aa).

S-adenosyl-L-methionine contacts are provided by residues Thr-89–Thr-90, Glu-107–Val-108, Asp-132–Ala-133, and Asp-152–Gln-155.

It belongs to the methyltransferase superfamily. Fibrillarin family. As to quaternary structure, interacts with nop5. Component of box C/D small ribonucleoprotein (sRNP) particles that contain rpl7ae, FlpA and nop5, plus a guide RNA.

Involved in pre-rRNA and tRNA processing. Utilizes the methyl donor S-adenosyl-L-methionine to catalyze the site-specific 2'-hydroxyl methylation of ribose moieties in rRNA and tRNA. Site specificity is provided by a guide RNA that base pairs with the substrate. Methylation occurs at a characteristic distance from the sequence involved in base pairing with the guide RNA. In Thermoplasma acidophilum (strain ATCC 25905 / DSM 1728 / JCM 9062 / NBRC 15155 / AMRC-C165), this protein is Fibrillarin-like rRNA/tRNA 2'-O-methyltransferase.